The sequence spans 280 residues: Proteasome subunit beta (280 aa).

Residues 1–53 (MSEYSAGRSGFSPAYLDRVGSSFTDFLAAAAPHLLPGSRPVPQIPVGNVTPHG) constitute a propeptide, removed in mature form; by autocatalysis. Residue Thr54 is the Nucleophile of the active site.

It belongs to the peptidase T1B family. As to quaternary structure, the 20S proteasome core is composed of 14 alpha and 14 beta subunits that assemble into four stacked heptameric rings, resulting in a barrel-shaped structure. The two inner rings, each composed of seven catalytic beta subunits, are sandwiched by two outer rings, each composed of seven alpha subunits. The catalytic chamber with the active sites is on the inside of the barrel. Has a gated structure, the ends of the cylinder being occluded by the N-termini of the alpha-subunits. Is capped by the proteasome-associated ATPase, ARC.

It localises to the cytoplasm. It catalyses the reaction Cleavage of peptide bonds with very broad specificity.. Its pathway is protein degradation; proteasomal Pup-dependent pathway. Its activity is regulated as follows. The formation of the proteasomal ATPase ARC-20S proteasome complex, likely via the docking of the C-termini of ARC into the intersubunit pockets in the alpha-rings, may trigger opening of the gate for substrate entry. Interconversion between the open-gate and close-gate conformations leads to a dynamic regulation of the 20S proteasome proteolysis activity. In terms of biological role, component of the proteasome core, a large protease complex with broad specificity involved in protein degradation. This is Proteasome subunit beta from Geodermatophilus obscurus (strain ATCC 25078 / DSM 43160 / JCM 3152 / CCUG 61914 / KCC A-0152 / KCTC 9177 / NBRC 13315 / NRRL B-3577 / G-20).